A 298-amino-acid polypeptide reads, in one-letter code: Tyrosine recombinase XerC (298 aa).

A Core-binding (CB) domain is found at 1 to 84; it reads MNHIQEAFLN…TLRTFYEYWM (84 aa). The 182-residue stretch at 105-286 folds into the Tyr recombinase domain; the sequence is YLPQFFYEEE…SNQQLRKVYL (182 aa). Residues R145, K169, H238, R241, and H264 contribute to the active site. The active-site O-(3'-phospho-DNA)-tyrosine intermediate is Y273.

The protein belongs to the 'phage' integrase family. XerC subfamily. In terms of assembly, forms a cyclic heterotetrameric complex composed of two molecules of XerC and two molecules of XerD.

It localises to the cytoplasm. In terms of biological role, site-specific tyrosine recombinase, which acts by catalyzing the cutting and rejoining of the recombining DNA molecules. The XerC-XerD complex is essential to convert dimers of the bacterial chromosome into monomers to permit their segregation at cell division. It also contributes to the segregational stability of plasmids. The protein is Tyrosine recombinase XerC of Staphylococcus aureus (strain MRSA252).